The chain runs to 248 residues: MLPNAAGLLVAGVVSLSGVAAHGHVSKIFLDGQEYGGWIADVYPYMPEPPETIGWPTNVTDNGFVSPDRFSSPEIICHRGGVPSAISAPVSAGGTVELEWSTWPESHHGPVLNYLAKVDGDFSDIGPSTLQFFKFDETGLVSGSNPGYWGTDVMLANGRRYSMMIPSTIAPGKYVLRHELVALQNVGAAQLYPQCINIEVTSNTTGGDVNPGGTPATELYSPADPGFLFNIYEQYDSYPIPGQDVFRD.

The first 21 residues, 1–21 (MLPNAAGLLVAGVVSLSGVAA), serve as a signal peptide directing secretion. His22 serves as a coordination point for Cu(2+). The N-linked (GlcNAc...) asparagine glycan is linked to Asn58. A disulfide bridge connects residues Cys77 and Cys195. His107 serves as a coordination point for Cu(2+). O2 is bound at residue Gln190. Residue Tyr192 coordinates Cu(2+). A glycan (N-linked (GlcNAc...) asparagine) is linked at Asn203.

The protein belongs to the polysaccharide monooxygenase AA9 family. The cofactor is Cu(2+).

The protein localises to the secreted. It carries out the reaction [(1-&gt;4)-beta-D-glucosyl]n+m + reduced acceptor + O2 = 4-dehydro-beta-D-glucosyl-[(1-&gt;4)-beta-D-glucosyl]n-1 + [(1-&gt;4)-beta-D-glucosyl]m + acceptor + H2O.. Its function is as follows. Lytic polysaccharide monooxygenase (LPMO) that depolymerizes crystalline and amorphous polysaccharides via the oxidation of scissile alpha- or beta-(1-4)-glycosidic bonds, yielding C1 or C4 oxidation products. Catalysis by LPMOs requires the reduction of the active-site copper from Cu(II) to Cu(I) by a reducing agent and H(2)O(2) or O(2) as a cosubstrate. This Malbranchea cinnamomea (Thermophilic fungus) protein is AA9 family lytic polysaccharide monooxygenase G.